Reading from the N-terminus, the 601-residue chain is Glutathione-regulated potassium-efflux system protein KefB (601 aa).

13 consecutive transmembrane segments (helical) span residues 5–25 (SLLMAGLLYLCAAVIAVPLAA), 29–49 (IGAVLGYLLAGIAIGPWGLGF), 55–75 (EILHFSELGVVFLMFIIGLEL), 87–107 (IFGVGAAQVLLSAAVLGGLLW), 115–135 (AAIIGGIGLAMSSTAMALQLM), 152–172 (VLLFQDLAVIPALALVPLLAG), 180–202 (WMKLGMKVLAFAGMLVGGRYLLR), 207–227 (FIAASGVREVFTAAALLLVLG), 230–250 (LFMEALGLSMALGTFIAGILL), 268–288 (GLLLGLFFISVGMALNLGVLY), 291–311 (ILEILAGVVMLVTVKTAVLYL), 324–344 (LQFSGVLSQGGEFAFVLFSAA), and 356–376 (PLLLVTVTLSMMTTPLLMQGV). Positions 400 to 519 (KPQVIVVGFG…AGVTQFSRET (120 aa)) constitute an RCK N-terminal domain.

This sequence belongs to the monovalent cation:proton antiporter 2 (CPA2) transporter (TC 2.A.37) family. KefB subfamily. In terms of assembly, interacts with the regulatory subunit KefG.

The protein localises to the cell inner membrane. Pore-forming subunit of a potassium efflux system that confers protection against electrophiles. Catalyzes K(+)/H(+) antiport. The polypeptide is Glutathione-regulated potassium-efflux system protein KefB (Erwinia tasmaniensis (strain DSM 17950 / CFBP 7177 / CIP 109463 / NCPPB 4357 / Et1/99)).